We begin with the raw amino-acid sequence, 508 residues long: MPSVGIVIGDGKKEYPGKLTLYVTVTCIVAAMGGLIFGYDIGISGGVTTMDSFQQKFFPSVYEKQKKDHDSNQYCRFDSVSLTLFTSSLYLAALCSSLVASYVTRQFGRKISMLLGGVLFCAGALLNGFATAVWMLIVGRLLLGFGIGFTNQSVPLYLSEMAPYKYRGALNIGFQLSITIGILVANVLNFFFSKISWGWRLSLGGAVVPALIITVGSLILPDTPNSMIERGQFRLAEAKLRKIRGVDDIDDEINDLIIASEASKLVEHPWRNLLQRKYRPHLTMAILIPAFQQLTGINVIMFYAPVLFQTIGFGSDAALISAVVTGLVNVGATVVSIYGVDKWGRRFLFLEGGFQMLISQVAVAAAIGAKFGVDGTPGVLPKWYAIVVVLFICIYVAAFAWSWGPLGWLVPSEIFPLEIRSAAQSITVSVNMIFTFLIAQVFLMMLCHLKFGLFIFFAFFVVVMSIFVYLFLPETRGVPIEEMNRVWRSHWYWSKFVDAEKNLTKVVI.

Residues 1–22 (MPSVGIVIGDGKKEYPGKLTLY) are Cytoplasmic-facing. 12 helical membrane passes run 23-43 (VTVT…DIGI), 80-100 (VSLT…SLVA), 118-138 (VLFC…MLIV), 141-161 (LLLG…LSEM), 172-192 (IGFQ…NFFF), 201-221 (LSLG…LILP), 294-314 (LTGI…IGFG), 317-337 (AALI…VVSI), 347-367 (FLFL…AAAI), 383-403 (WYAI…AWSW), 426-446 (ITVS…LMML), and 451-471 (FGLF…VYLF). Residues 472–508 (LPETRGVPIEEMNRVWRSHWYWSKFVDAEKNLTKVVI) lie on the Cytoplasmic side of the membrane.

It belongs to the major facilitator superfamily. Sugar transporter (TC 2.A.1.1) family.

Its subcellular location is the membrane. In terms of biological role, mediates an active uptake of hexoses, probably by sugar/hydrogen symport. The sequence is that of Sugar transport protein 12 (STP12) from Arabidopsis thaliana (Mouse-ear cress).